The primary structure comprises 67 residues: Small ribosomal subunit protein bS21 (67 aa).

Belongs to the bacterial ribosomal protein bS21 family.

This Acidiphilium cryptum (strain JF-5) protein is Small ribosomal subunit protein bS21.